Consider the following 334-residue polypeptide: UDP-N-acetylglucosamine--N-acetylmuramyl-(pentapeptide) pyrophosphoryl-undecaprenol N-acetylglucosamine transferase (334 aa).

Residues 11 to 13, Asn-125, Ser-185, Ile-229, and Gln-274 contribute to the UDP-N-acetyl-alpha-D-glucosamine site; that span reads TGG.

The protein belongs to the glycosyltransferase 28 family. MurG subfamily.

The protein localises to the cell inner membrane. The enzyme catalyses di-trans,octa-cis-undecaprenyl diphospho-N-acetyl-alpha-D-muramoyl-L-alanyl-D-glutamyl-meso-2,6-diaminopimeloyl-D-alanyl-D-alanine + UDP-N-acetyl-alpha-D-glucosamine = di-trans,octa-cis-undecaprenyl diphospho-[N-acetyl-alpha-D-glucosaminyl-(1-&gt;4)]-N-acetyl-alpha-D-muramoyl-L-alanyl-D-glutamyl-meso-2,6-diaminopimeloyl-D-alanyl-D-alanine + UDP + H(+). The protein operates within cell wall biogenesis; peptidoglycan biosynthesis. Its function is as follows. Cell wall formation. Catalyzes the transfer of a GlcNAc subunit on undecaprenyl-pyrophosphoryl-MurNAc-pentapeptide (lipid intermediate I) to form undecaprenyl-pyrophosphoryl-MurNAc-(pentapeptide)GlcNAc (lipid intermediate II). The sequence is that of UDP-N-acetylglucosamine--N-acetylmuramyl-(pentapeptide) pyrophosphoryl-undecaprenol N-acetylglucosamine transferase from Thermosipho africanus (strain TCF52B).